Here is a 291-residue protein sequence, read N- to C-terminus: Isopentenyl-diphosphate Delta-isomerase I, chloroplastic (291 aa).

The N-terminal 52 residues, 1–52 (MSTASLFSFPSFHLRSLLPSLSSSSSSSSSRFAPPRLSPIRSPAPRTQLSVR), are a transit peptide targeting the chloroplast. Serine 2 bears the N-acetylthreonine mark. Residues 20–39 (SLSSSSSSSSSRFAPPRLSP) show a composition bias toward low complexity. The tract at residues 20 to 43 (SLSSSSSSSSSRFAPPRLSPIRSP) is disordered. Lysine 95 lines the substrate pocket. Residues histidine 99 and histidine 111 each coordinate Mg(2+). The 153-residue stretch at 109 to 261 (LLHRAFSVFL…AVKLSPWFRL (153 aa)) folds into the Nudix hydrolase domain. Substrate contacts are provided by arginine 130 and lysine 134. The active site involves cysteine 146. Position 147 (serine 147) interacts with substrate. Positions 147–177 (SHPLYRESELIEENVLGVRNAAQRKLFDELG) match the Nudix box motif. Glutamate 206 and glutamate 208 together coordinate Mg(2+). Residue glutamate 208 is part of the active site.

This sequence belongs to the IPP isomerase type 1 family. Mg(2+) serves as cofactor.

Its subcellular location is the plastid. The protein resides in the chloroplast. The protein localises to the cytoplasm. It catalyses the reaction isopentenyl diphosphate = dimethylallyl diphosphate. It participates in isoprenoid biosynthesis; dimethylallyl diphosphate biosynthesis; dimethylallyl diphosphate from isopentenyl diphosphate: step 1/1. The protein operates within porphyrin-containing compound metabolism; chlorophyll biosynthesis. Functionally, catalyzes the 1,3-allylic rearrangement of the homoallylic substrate isopentenyl (IPP) to its highly electrophilic allylic isomer, dimethylallyl diphosphate (DMAPP). The protein is Isopentenyl-diphosphate Delta-isomerase I, chloroplastic (IPP1) of Arabidopsis thaliana (Mouse-ear cress).